The sequence spans 283 residues: Serine protease 57 (283 aa).

The first 31 residues, 1–31 (MGLGLRGWGRPLLTVATALMLPVKPPAGSWG), serve as a signal peptide directing secretion. One can recognise a Peptidase S1 domain in the interval 34-263 (IIGGHEVTPH…FVAWIWDVVR (230 aa)). An intrachain disulfide couples cysteine 59 to cysteine 75. Residues histidine 74 and aspartate 122 each act as charge relay system in the active site. Asparagine 129 and asparagine 189 each carry an N-linked (GlcNAc...) asparagine glycan. Cystine bridges form between cysteine 157/cysteine 224, cysteine 188/cysteine 202, and cysteine 214/cysteine 239. Serine 218 serves as the catalytic Charge relay system.

This sequence belongs to the peptidase S1 family. After cleavage of the signal peptide, the N-terminus is probably further processed by CTSC. Processing by CTSC is probably required for accumulation in cytoplasmic granules; in the absence of CTSC the protein does not accumulate. In terms of processing, N-glycosylated. As to expression, detected in peripheral blood neutrophil granulocytes, but not in other types of leukocytes. Detected in neutrophils and neutrophil precursors in bone marrow (at protein level). Detected in myeloblasts and promyelocytes in bone marrow.

The protein resides in the cytoplasmic granule lumen. The protein localises to the secreted. With respect to regulation, inhibited by SERPINA1, SERPINC1 and SERPING1. Its function is as follows. Serine protease that cleaves preferentially after Arg residues. Can also cleave after citrulline (deimidated arginine) and methylarginine residues. The protein is Serine protease 57 (PRSS57) of Homo sapiens (Human).